Consider the following 56-residue polypeptide: Large ribosomal subunit protein bL32 (56 aa).

The protein belongs to the bacterial ribosomal protein bL32 family.

This Synechococcus sp. (strain CC9311) protein is Large ribosomal subunit protein bL32.